The chain runs to 351 residues: Leukotriene B4 receptor 1 (351 aa).

Topologically, residues 1–21 (MAANTTSPAAPSSPGGMSLSL) are extracellular. Residue N4 is glycosylated (N-linked (GlcNAc...) asparagine). Residues 22–44 (LPIVLLSVALAVGLPGNSFVVWS) traverse the membrane as a helical segment. Residues 45–56 (ILKRMQKRTVTA) lie on the Cytoplasmic side of the membrane. The chain crosses the membrane as a helical span at residues 57–77 (LLVLNLALADLAVLLTAPFFL). The Extracellular segment spans residues 78–93 (HFLARGTWSFREMGCR). A helical membrane pass occupies residues 94–115 (LCHYVCGISMYASVLLITIMSL). Residues 116-140 (DRSLAVARPFMSQKVRTKAFARWVL) are Cytoplasmic-facing. The helical transmembrane segment at 141-161 (AGIWVVSFLLAIPVLVYRTVK) threads the bilayer. The Extracellular portion of the chain corresponds to 162–179 (WNNRTLICAPNYPNKEHK). N164 carries an N-linked (GlcNAc...) asparagine glycan. Residues 180 to 200 (VFHLLFEAITGFLLPFLAVVA) form a helical membrane-spanning segment. Residues 201 to 222 (SYSDIGRRLQARRFRRSRRTGR) are Cytoplasmic-facing. The chain crosses the membrane as a helical span at residues 223-243 (LVVLIILAFAAFWLPYHLVNL). At 244–268 (VEAGRTVAGWDKNSPAGQRLRLARY) the chain is on the extracellular side. A helical transmembrane segment spans residues 269–289 (VLIALAFLSSSVNPVLYACAG). Residues 290–351 (GGLLRSAGVG…TSSTIPESSK (62 aa)) lie on the Cytoplasmic side of the membrane. Composition is skewed to polar residues over residues 311–326 (EVSS…QTPK) and 339–351 (SFMT…ESSK). The interval 311–351 (EVSSTRRGGTLVQTPKDTPACPEPGPTDSFMTSSTIPESSK) is disordered.

The protein belongs to the G-protein coupled receptor 1 family. In terms of processing, phosphorylated by GRK6 upon leukotriene B4 binding; which promotes desensitization. In terms of tissue distribution, highly expressed on activated leukocytes, including eosinophils.

It is found in the cell membrane. Functionally, receptor for leukotriene B4, a potent chemoattractant involved in inflammation and immune response. The chain is Leukotriene B4 receptor 1 (Ltb4r) from Mus musculus (Mouse).